The primary structure comprises 462 residues: L-seryl-tRNA(Sec) selenium transferase (462 aa).

At Lys-295 the chain carries N6-(pyridoxal phosphate)lysine.

It belongs to the SelA family. In terms of assembly, homodecamer; pentamer of dimers. Binds only one seryl-tRNA(Sec) per dimer. Pyridoxal 5'-phosphate is required as a cofactor.

It localises to the cytoplasm. The catalysed reaction is L-seryl-tRNA(Sec) + selenophosphate + H(+) = L-selenocysteinyl-tRNA(Sec) + phosphate. The protein operates within aminoacyl-tRNA biosynthesis; selenocysteinyl-tRNA(Sec) biosynthesis; selenocysteinyl-tRNA(Sec) from L-seryl-tRNA(Sec) (bacterial route): step 1/1. Converts seryl-tRNA(Sec) to selenocysteinyl-tRNA(Sec) required for selenoprotein biosynthesis. The sequence is that of L-seryl-tRNA(Sec) selenium transferase from Klebsiella pneumoniae subsp. pneumoniae (strain ATCC 700721 / MGH 78578).